The chain runs to 164 residues: MTGAVCPGSFDPVTNGHLDVIGRVAAQFDEVVVTVLINKSKRGMFTIDERIEMLEDATSHLPNVRVTSWHGLLVDYAKQEGLSAIVKGLRGANDFDYELQMAQMNQKLTGVDTLFVATNPTYSYLSSSLVKEVATFGGDVSDMLPAKVHSRLLARIAERAAENS.

S9 is a binding site for substrate. ATP is bound by residues S9–F10 and H17. Positions 41, 73, and 87 each coordinate substrate. Residues G88–R90, E98, and Y122–S128 contribute to the ATP site.

Belongs to the bacterial CoaD family. In terms of assembly, homohexamer. It depends on Mg(2+) as a cofactor.

The protein localises to the cytoplasm. The enzyme catalyses (R)-4'-phosphopantetheine + ATP + H(+) = 3'-dephospho-CoA + diphosphate. The protein operates within cofactor biosynthesis; coenzyme A biosynthesis; CoA from (R)-pantothenate: step 4/5. Its function is as follows. Reversibly transfers an adenylyl group from ATP to 4'-phosphopantetheine, yielding dephospho-CoA (dPCoA) and pyrophosphate. The protein is Phosphopantetheine adenylyltransferase of Rhodococcus erythropolis (strain PR4 / NBRC 100887).